The chain runs to 346 residues: Elongation factor Ts (346 aa).

Residues 80 to 83 (TDFV) are involved in Mg(2+) ion dislocation from EF-Tu.

The protein belongs to the EF-Ts family.

It is found in the cytoplasm. Associates with the EF-Tu.GDP complex and induces the exchange of GDP to GTP. It remains bound to the aminoacyl-tRNA.EF-Tu.GTP complex up to the GTP hydrolysis stage on the ribosome. The polypeptide is Elongation factor Ts (Streptococcus agalactiae serotype Ia (strain ATCC 27591 / A909 / CDC SS700)).